The sequence spans 43 residues: Neurotrophin-3 (43 aa).

The protein belongs to the NGF-beta family.

It localises to the secreted. Its function is as follows. Seems to promote the survival of visceral and proprioceptive sensory neurons. In Raja clavata (Thornback ray), this protein is Neurotrophin-3 (ntf3).